We begin with the raw amino-acid sequence, 77 residues long: Putative defensin-like protein 118 (77 aa).

The first 25 residues, 1–25 (MSKSTILAIFMIVLVLGKVTKETQG), serve as a signal peptide directing secretion. 4 disulfide bridges follow: C29/C75, C39/C58, C44/C69, and C48/C71.

This sequence belongs to the DEFL family.

It is found in the secreted. The polypeptide is Putative defensin-like protein 118 (LCR52) (Arabidopsis thaliana (Mouse-ear cress)).